The sequence spans 393 residues: Formate-dependent phosphoribosylglycinamide formyltransferase (393 aa).

N(1)-(5-phospho-beta-D-ribosyl)glycinamide-binding positions include 22-23 and E82; that span reads EL. ATP-binding positions include R114, K155, 160–165, 195–198, and E203; these read SSGKGQ and EGFI. The region spanning 119 to 308 is the ATP-grasp domain; the sequence is RLAAEELKLP…QFALHARAIL (190 aa). Mg(2+) is bound by residues E267 and E279. N(1)-(5-phospho-beta-D-ribosyl)glycinamide-binding positions include D286, K356, and 363–364; that span reads RR.

The protein belongs to the PurK/PurT family. In terms of assembly, homodimer.

It catalyses the reaction N(1)-(5-phospho-beta-D-ribosyl)glycinamide + formate + ATP = N(2)-formyl-N(1)-(5-phospho-beta-D-ribosyl)glycinamide + ADP + phosphate + H(+). The protein operates within purine metabolism; IMP biosynthesis via de novo pathway; N(2)-formyl-N(1)-(5-phospho-D-ribosyl)glycinamide from N(1)-(5-phospho-D-ribosyl)glycinamide (formate route): step 1/1. Functionally, involved in the de novo purine biosynthesis. Catalyzes the transfer of formate to 5-phospho-ribosyl-glycinamide (GAR), producing 5-phospho-ribosyl-N-formylglycinamide (FGAR). Formate is provided by PurU via hydrolysis of 10-formyl-tetrahydrofolate. The polypeptide is Formate-dependent phosphoribosylglycinamide formyltransferase (Pseudomonas syringae pv. syringae (strain B728a)).